The following is a 65-amino-acid chain: Cytochrome b-c1 complex subunit 9, mitochondrial (65 aa).

The helical transmembrane segment at 14–34 (IYVATIFGGAFAFQGFFDVAV) threads the bilayer.

This sequence belongs to the UQCR10/QCR9 family. As to quaternary structure, component of the ubiquinol-cytochrome c oxidoreductase (cytochrome b-c1 complex, complex III, CIII), a multisubunit enzyme composed of 10 subunits. The complex is composed of 3 respiratory subunits cytochrome b (COB), cytochrome c1 (CYT1) and Rieske protein (RIP1), 2 core protein subunits COR1 and QCR2, and 5 low-molecular weight protein subunits QCR6, QCR7, QCR8, QCR9 and QCR10. The complex exists as an obligatory dimer and forms supercomplexes (SCs) in the inner mitochondrial membrane with a monomer or a dimer of cytochrome c oxidase (complex IV, CIV), resulting in 2 different assemblies (supercomplexes III(2)IV and III(2)IV(2)).

The protein resides in the membrane. Its subcellular location is the mitochondrion inner membrane. Its function is as follows. Component of the ubiquinol-cytochrome c oxidoreductase, a multisubunit transmembrane complex that is part of the mitochondrial electron transport chain which drives oxidative phosphorylation. The complex plays an important role in the uptake of multiple carbon sources present in different host niches. The chain is Cytochrome b-c1 complex subunit 9, mitochondrial from Candida albicans (strain SC5314 / ATCC MYA-2876) (Yeast).